A 149-amino-acid polypeptide reads, in one-letter code: Transcriptional repressor NrdR (149 aa).

A zinc finger spans residues 3 to 34 (CPFCSATDTKVIDSRLVADGHQVRRRRECVQC). The ATP-cone domain occupies 49–139 (PRVVKQDGSR…VYRAFEDVSE (91 aa)).

The protein belongs to the NrdR family. It depends on Zn(2+) as a cofactor.

Negatively regulates transcription of bacterial ribonucleotide reductase nrd genes and operons by binding to NrdR-boxes. The polypeptide is Transcriptional repressor NrdR (Shewanella pealeana (strain ATCC 700345 / ANG-SQ1)).